The following is an 89-amino-acid chain: Small ribosomal subunit protein uS14 (89 aa).

It belongs to the universal ribosomal protein uS14 family. Part of the 30S ribosomal subunit. Contacts proteins S3 and S10.

Functionally, binds 16S rRNA, required for the assembly of 30S particles and may also be responsible for determining the conformation of the 16S rRNA at the A site. This Chlorobium chlorochromatii (strain CaD3) protein is Small ribosomal subunit protein uS14.